A 424-amino-acid chain; its full sequence is Phosphoribosylamine--glycine ligase (424 aa).

An ATP-grasp domain is found at 111 to 312 (KAFVKECGIK…LLDLFLATAK (202 aa)). Position 137 to 189 (137 to 189 (IQNASFPLVIKALNKNTSIVHHQEEALKILEDALKQSNEPVIIEPFLEGFELS)) interacts with ATP.

It belongs to the GARS family.

It catalyses the reaction 5-phospho-beta-D-ribosylamine + glycine + ATP = N(1)-(5-phospho-beta-D-ribosyl)glycinamide + ADP + phosphate + H(+). It participates in purine metabolism; IMP biosynthesis via de novo pathway; N(1)-(5-phospho-D-ribosyl)glycinamide from 5-phospho-alpha-D-ribose 1-diphosphate: step 2/2. The polypeptide is Phosphoribosylamine--glycine ligase (purD) (Helicobacter pylori (strain J99 / ATCC 700824) (Campylobacter pylori J99)).